A 372-amino-acid polypeptide reads, in one-letter code: Lipoyl synthase, mitochondrial (372 aa).

Cys103, Cys108, Cys114, Cys134, Cys138, Cys141, and Ser349 together coordinate [4Fe-4S] cluster. The Radical SAM core domain occupies 119-338 (EHGTQTATIM…EERGNQLGFL (220 aa)).

Belongs to the radical SAM superfamily. Lipoyl synthase family. Requires [4Fe-4S] cluster as cofactor.

It is found in the mitochondrion. The catalysed reaction is [[Fe-S] cluster scaffold protein carrying a second [4Fe-4S](2+) cluster] + N(6)-octanoyl-L-lysyl-[protein] + 2 oxidized [2Fe-2S]-[ferredoxin] + 2 S-adenosyl-L-methionine + 4 H(+) = [[Fe-S] cluster scaffold protein] + N(6)-[(R)-dihydrolipoyl]-L-lysyl-[protein] + 4 Fe(3+) + 2 hydrogen sulfide + 2 5'-deoxyadenosine + 2 L-methionine + 2 reduced [2Fe-2S]-[ferredoxin]. The protein operates within protein modification; protein lipoylation via endogenous pathway; protein N(6)-(lipoyl)lysine from octanoyl-[acyl-carrier-protein]: step 2/2. Its function is as follows. Catalyzes the radical-mediated insertion of two sulfur atoms into the C-6 and C-8 positions of the octanoyl moiety bound to the lipoyl domains of lipoate-dependent enzymes, thereby converting the octanoylated domains into lipoylated derivatives. The polypeptide is Lipoyl synthase, mitochondrial (Drosophila willistoni (Fruit fly)).